We begin with the raw amino-acid sequence, 601 residues long: Glutathione-regulated potassium-efflux system protein KefB (601 aa).

13 helical membrane passes run Ser4–Ala24, Ile29–Phe49, Glu55–Leu75, Ile87–Met107, Ala115–Met135, Val152–Gly172, His177–Gly197, Phe207–Gly227, Leu230–Leu250, Ala262–Leu282, Leu284–Val304, Met324–Ala344, and Ala356–Val376. In terms of domain architecture, RCK N-terminal spans Lys400–Thr519.

Belongs to the monovalent cation:proton antiporter 2 (CPA2) transporter (TC 2.A.37) family. KefB subfamily. In terms of assembly, interacts with the regulatory subunit KefG.

The protein localises to the cell inner membrane. Its function is as follows. Pore-forming subunit of a potassium efflux system that confers protection against electrophiles. Catalyzes K(+)/H(+) antiport. The sequence is that of Glutathione-regulated potassium-efflux system protein KefB from Shigella boydii serotype 18 (strain CDC 3083-94 / BS512).